The sequence spans 190 residues: Xanthine phosphoribosyltransferase (190 aa).

Residues Leu20 and Asn27 each coordinate xanthine. Residue 127–131 (AYGNA) participates in 5-phospho-alpha-D-ribose 1-diphosphate binding. A xanthine-binding site is contributed by Lys155.

Belongs to the purine/pyrimidine phosphoribosyltransferase family. Xpt subfamily. In terms of assembly, homodimer.

The protein resides in the cytoplasm. It catalyses the reaction XMP + diphosphate = xanthine + 5-phospho-alpha-D-ribose 1-diphosphate. It functions in the pathway purine metabolism; XMP biosynthesis via salvage pathway; XMP from xanthine: step 1/1. Functionally, converts the preformed base xanthine, a product of nucleic acid breakdown, to xanthosine 5'-monophosphate (XMP), so it can be reused for RNA or DNA synthesis. The sequence is that of Xanthine phosphoribosyltransferase from Bacteroides thetaiotaomicron (strain ATCC 29148 / DSM 2079 / JCM 5827 / CCUG 10774 / NCTC 10582 / VPI-5482 / E50).